The sequence spans 129 residues: Large ribosomal subunit protein bL21 (129 aa).

The disordered stretch occupies residues 102-129 (TDNAKPTKGPRPKKEKVAKEATKEDAAA). The span at 116–129 (EKVAKEATKEDAAA) shows a compositional bias: basic and acidic residues.

The protein belongs to the bacterial ribosomal protein bL21 family. In terms of assembly, part of the 50S ribosomal subunit. Contacts protein L20.

In terms of biological role, this protein binds to 23S rRNA in the presence of protein L20. The protein is Large ribosomal subunit protein bL21 of Bradyrhizobium diazoefficiens (strain JCM 10833 / BCRC 13528 / IAM 13628 / NBRC 14792 / USDA 110).